We begin with the raw amino-acid sequence, 310 residues long: Methionyl-tRNA formyltransferase (310 aa).

Residue 106 to 109 coordinates (6S)-5,6,7,8-tetrahydrofolate; it reads SLLP.

This sequence belongs to the Fmt family.

It carries out the reaction L-methionyl-tRNA(fMet) + (6R)-10-formyltetrahydrofolate = N-formyl-L-methionyl-tRNA(fMet) + (6S)-5,6,7,8-tetrahydrofolate + H(+). Functionally, attaches a formyl group to the free amino group of methionyl-tRNA(fMet). The formyl group appears to play a dual role in the initiator identity of N-formylmethionyl-tRNA by promoting its recognition by IF2 and preventing the misappropriation of this tRNA by the elongation apparatus. The protein is Methionyl-tRNA formyltransferase of Fervidobacterium nodosum (strain ATCC 35602 / DSM 5306 / Rt17-B1).